A 324-amino-acid chain; its full sequence is Serine carboxypeptidase II-1 (324 aa).

Residue Asn10 is glycosylated (N-linked (GlcNAc...) asparagine). The active site involves Ser41. Cystine bridges form between Cys109–Cys121 and Cys145–Cys170. Positions 150-162 (LHRRRLIKGRRPW) are cleaved as a propeptide — linker peptide. The N-linked (GlcNAc...) asparagine glycan is linked to Asn191. Active-site residues include Asp239 and His291.

The protein belongs to the peptidase S10 family. As to quaternary structure, carboxypeptidase II is a dimer, where each monomer is composed of two chains linked by a disulfide bond. Post-translationally, the linker peptide is endoproteolytically excised during enzyme maturation.

The catalysed reaction is Preferential release of a C-terminal arginine or lysine residue.. The sequence is that of Serine carboxypeptidase II-1 (CXP;2-1) from Hordeum vulgare (Barley).